The primary structure comprises 441 residues: Probable tRNA pseudouridine synthase D (441 aa).

Asp-89 (nucleophile) is an active-site residue. A TRUD domain is found at 168-393 (GVPNFFGVQR…SKGTRREVLL (226 aa)).

Belongs to the pseudouridine synthase TruD family.

The enzyme catalyses uridine(13) in tRNA = pseudouridine(13) in tRNA. In terms of biological role, could be responsible for synthesis of pseudouridine from uracil-13 in transfer RNAs. This Methanosarcina acetivorans (strain ATCC 35395 / DSM 2834 / JCM 12185 / C2A) protein is Probable tRNA pseudouridine synthase D.